Here is a 543-residue protein sequence, read N- to C-terminus: MAVITEHGGTTSSPPENNNSIGNGKHRVNGHQLSTSLTIPEFFAHKNIFVTGGTGFLGTVLIEALLDTHPDIGTIYVLVRGKRKFDPNERIRRLLQKPIFEKYSEKTLSKVVPVVGELSEPNFGFGPELLQELIDRVNVIYHSAATIKFSSPLRTAIRTNLTGTMRTIELAKQLKQLAAYIYCSTAFCNSNNRGLIAEEVYKSQFDPYEMMKMAEDDSAWEDFTDQKCKGYIRDHPNTYTFTKNLSENLLMAEMSGLPAAIVRPSIVYGTLEHPMKGWVGNANSGHLGFLAGFVKGIFRTMCGNANAVIDIIPCDYVINSSLVMGWYVGTRKLEQPEIIHCTSGEVNPLNLAEFCTIINDSVERHPPNSFVWKPVTKLRNGWRYNLFFYLFHLLPAMVFIIPEKLFGIGMPQHTAYEYMRVFQKGTKAFDYFLDKDFRYSLKNALRISALIPESDRRRYNFDASQCDWSEFIDRCLIGIRRFYFKESAVTTDWHRNYWKVFNVLYYAGYVVIFAVLYFALTLTLGLQIGLTLAVLIWGFLVWL.

The interval 1–29 is disordered; the sequence is MAVITEHGGTTSSPPENNNSIGNGKHRVN. Over residues 8 to 22 the composition is skewed to polar residues; the sequence is GGTTSSPPENNNSIG. 3 helical membrane passes run 386 to 406, 500 to 520, and 522 to 542; these read LFFY…EKLF, VFNV…YFAL, and LTLG…FLVW.

This sequence belongs to the fatty acyl-CoA reductase family.

Its subcellular location is the membrane. The enzyme catalyses a long-chain fatty acyl-CoA + 2 NADPH + 2 H(+) = a long-chain primary fatty alcohol + 2 NADP(+) + CoA. The catalysed reaction is hexadecanoyl-CoA + 2 NADPH + 2 H(+) = hexadecan-1-ol + 2 NADP(+) + CoA. It carries out the reaction octadecanoyl-CoA + 2 NADPH + 2 H(+) = octadecan-1-ol + 2 NADP(+) + CoA. Catalyzes the reduction of C16 or C18 fatty acyl-CoA to fatty alcohols. The protein is Putative fatty acyl-CoA reductase CG8303 of Drosophila melanogaster (Fruit fly).